The following is a 363-amino-acid chain: Type-2 angiotensin II receptor (363 aa).

Topologically, residues 1 to 45 (MKGNSTLATTSKNITSGLHFGLVNISGNNESTLNCSQKPSDKHLD) are extracellular. N-linked (GlcNAc...) asparagine glycosylation is found at asparagine 4, asparagine 13, asparagine 24, asparagine 29, and asparagine 34. 2 disulfide bridges follow: cysteine 35–cysteine 290 and cysteine 117–cysteine 195. A helical transmembrane segment spans residues 46–70 (AIPILYYIIFVIGFLVNIVVVTLFC). Residues 71–80 (CQKGPKKVSS) are Cytoplasmic-facing. The chain crosses the membrane as a helical span at residues 81–104 (IYIFNLAVADLLLLATLPLWATYY). Angiotensin II-binding residues include tyrosine 103 and tyrosine 104. At 105–114 (SYRYDWLFGP) the chain is on the extracellular side. The helical transmembrane segment at 115–140 (VMCKVFGSFLTLNMFASIFFITCMSV) threads the bilayer. At 141-159 (DRYQSVIYPFLSQRRNPWQ) the chain is on the cytoplasmic side. The chain crosses the membrane as a helical span at residues 160–181 (ASYIVPLVWCMACLSSLPTFYF). Angiotensin II contacts are provided by arginine 182, tyrosine 204, and lysine 215. The Extracellular segment spans residues 182–206 (RDVRTIEYLGVNACIMAFPPEKYAQ). Residues 207–232 (WSAGIALMKNILGFIIPLIFIATCYF) form a helical membrane-spanning segment. Topologically, residues 233–257 (GIRKHLLKTNSYGKNRITRDQVLKM) are cytoplasmic. A helical transmembrane segment spans residues 258-281 (AAAVVLAFIICWLPFHVLTFLDAL). Aspartate 279 lines the angiotensin II pocket. At 282-294 (AWMGVINSCEVIA) the chain is on the extracellular side. The chain crosses the membrane as a helical span at residues 295-320 (VIDLALPFAILLGFTNSCVNPFLYCF). Aspartate 297 serves as a coordination point for angiotensin II. Residues 321–363 (VGNRFQQKLRSVFRVPITWLQGKRESMSCRKSSSLREMETFVS) are Cytoplasmic-facing. A helix VIII region spans residues 324-333 (RFQQKLRSVF).

This sequence belongs to the G-protein coupled receptor 1 family. In terms of assembly, interacts with MTUS1. As to expression, in adult, highly expressed in myometrium with lower levels in adrenal gland and fallopian tube. Expressed in the cerebellum. Very highly expressed in fetal kidney and intestine.

The protein resides in the cell membrane. Functionally, receptor for angiotensin II, a vasoconstricting peptide. Signals primarily via a non-canonical G-protein- and beta-arrestin independent pathways. Cooperates with MTUS1 to inhibit ERK2 activation and cell proliferation. This Homo sapiens (Human) protein is Type-2 angiotensin II receptor.